A 141-amino-acid chain; its full sequence is Large ribosomal subunit protein bL17 (141 aa).

This sequence belongs to the bacterial ribosomal protein bL17 family. In terms of assembly, part of the 50S ribosomal subunit. Contacts protein L32.

The protein is Large ribosomal subunit protein bL17 of Maridesulfovibrio salexigens (strain ATCC 14822 / DSM 2638 / NCIMB 8403 / VKM B-1763) (Desulfovibrio salexigens).